Consider the following 293-residue polypeptide: Acetyl-coenzyme A carboxylase carboxyl transferase subunit beta (293 aa).

In terms of domain architecture, CoA carboxyltransferase N-terminal spans 29 to 293; sequence LWVKCSECSQ…GVKELAEANT (265 aa). The Zn(2+) site is built by Cys33, Cys36, Cys52, and Cys55. The segment at 33–55 adopts a C4-type zinc-finger fold; the sequence is CSECSQVAYRKDLISNFNVCNNC.

Belongs to the AccD/PCCB family. Acetyl-CoA carboxylase is a heterohexamer composed of biotin carboxyl carrier protein (AccB), biotin carboxylase (AccC) and two subunits each of ACCase subunit alpha (AccA) and ACCase subunit beta (AccD). Zn(2+) is required as a cofactor.

The protein resides in the cytoplasm. It carries out the reaction N(6)-carboxybiotinyl-L-lysyl-[protein] + acetyl-CoA = N(6)-biotinyl-L-lysyl-[protein] + malonyl-CoA. Its pathway is lipid metabolism; malonyl-CoA biosynthesis; malonyl-CoA from acetyl-CoA: step 1/1. Functionally, component of the acetyl coenzyme A carboxylase (ACC) complex. Biotin carboxylase (BC) catalyzes the carboxylation of biotin on its carrier protein (BCCP) and then the CO(2) group is transferred by the transcarboxylase to acetyl-CoA to form malonyl-CoA. The chain is Acetyl-coenzyme A carboxylase carboxyl transferase subunit beta from Prochlorococcus marinus (strain AS9601).